We begin with the raw amino-acid sequence, 446 residues long: Protein odr-4 homolog (446 aa).

The next 2 membrane-spanning stretches (helical) occupy residues 81–101 (MLPG…ELSK) and 424–444 (MGVV…FNYF).

The protein belongs to the ODR-4 family.

Its subcellular location is the membrane. Its function is as follows. May play a role in the trafficking of a subset of G-protein coupled receptors. In Gallus gallus (Chicken), this protein is Protein odr-4 homolog (ODR4).